The chain runs to 476 residues: Adenylosuccinate synthetase, chloroplastic (476 aa).

Residues 1–20 (AAAAAGRGRSFSPAAPAPSS) show a composition bias toward low complexity. Residues 1–34 (AAAAAGRGRSFSPAAPAPSSVRLPGRQAPAPAAA) form a disordered region. GTP-binding positions include 63–69 (GDEGKGK) and 91–93 (GHT). Catalysis depends on D64, which acts as the Proton acceptor. 2 residues coordinate Mg(2+): D64 and G91. IMP-binding positions include 64-67 (DEGK), 89-92 (NAGH), T181, R195, Q275, T290, and R354. H92 acts as the Proton donor in catalysis. 350–356 (TTTGRPR) lines the substrate pocket. Residues R356, 382 to 384 (KLD), and 465 to 467 (GVG) each bind GTP.

Belongs to the adenylosuccinate synthetase family. As to quaternary structure, homodimer. Mg(2+) is required as a cofactor.

It localises to the plastid. Its subcellular location is the chloroplast. It carries out the reaction IMP + L-aspartate + GTP = N(6)-(1,2-dicarboxyethyl)-AMP + GDP + phosphate + 2 H(+). The protein operates within purine metabolism; AMP biosynthesis via de novo pathway; AMP from IMP: step 1/2. Plays an important role in the de novo pathway and in the salvage pathway of purine nucleotide biosynthesis. Catalyzes the first committed step in the biosynthesis of AMP from IMP. This Triticum aestivum (Wheat) protein is Adenylosuccinate synthetase, chloroplastic.